Here is a 309-residue protein sequence, read N- to C-terminus: Taste receptor type 2 member 66 (309 aa).

Position 1 (M1) is a topological domain, extracellular. The helical transmembrane segment at 2–22 threads the bilayer; the sequence is ITFLPIIFSILIVVTFVIGNF. The Cytoplasmic portion of the chain corresponds to 23 to 46; it reads ANGFIALANSIEWFKRQKISFADQ. Residues 47–67 form a helical membrane-spanning segment; that stretch reads ILTALAVPRVGLLWVLLLNWY. The Extracellular segment spans residues 68–86; the sequence is ATELNPAFYSIEVRITAYN. The helical transmembrane segment at 87 to 107 threads the bilayer; it reads LWAVINHFSNWLATSLSIFYL. The Cytoplasmic segment spans residues 108 to 126; that stretch reads LKIANFSNLIFLRLKRRVK. Residues 127–147 traverse the membrane as a helical segment; sequence SVVLVILLGPLLFLVCHLFVI. Topologically, residues 148-178 are extracellular; the sequence is NMNQIIWTKEYEGNMTWKIKLRSAMYLSNTT. 2 N-linked (GlcNAc...) asparagine glycosylation sites follow: N161 and N176. Residues 179–199 form a helical membrane-spanning segment; the sequence is VTILANLVPFTVTLISFLLLV. Residues 200-229 are Cytoplasmic-facing; that stretch reads CSLCKHLKKMQLHGKGSQDPSTKVHIKALQ. The helical transmembrane segment at 230-250 threads the bilayer; the sequence is TVISFLLLCAIYFVSVIISVW. The Extracellular segment spans residues 251–259; it reads SFKNLENKP. A helical transmembrane segment spans residues 260–280; the sequence is VFMFCQAIGFSCSSAHPFILI. Over 281-309 the chain is Cytoplasmic; that stretch reads WGNKKLKQPFLSVLWQMRYWVKGEKPSSS.

Belongs to the G-protein coupled receptor T2R family.

The protein resides in the membrane. Its function is as follows. Receptor that may play a role in the perception of bitterness and is gustducin-linked. May play a role in sensing the chemical composition of the gastrointestinal content. The activity of this receptor may stimulate alpha gustducin, mediate PLC-beta-2 activation and lead to the gating of TRPM5. The sequence is that of Taste receptor type 2 member 66 (TAS2R66) from Pan paniscus (Pygmy chimpanzee).